The sequence spans 369 residues: Cyclin-I2 (369 aa).

Residues 1–116 (MASGAQLPPQ…SRKPRNLEGD (116 aa)) form a disordered region. Low complexity-rich tracts occupy residues 64–76 (AASLHAASAAVPV) and 83–101 (APAGKTADAVPAAAPEQAP).

It belongs to the cyclin family.

The chain is Cyclin-I2 (CCNI2) from Homo sapiens (Human).